A 641-amino-acid chain; its full sequence is Chaperone protein DnaK (641 aa).

Position 200 is a phosphothreonine; by autocatalysis (Thr200). Positions 602-611 are enriched in low complexity; that stretch reads AASSKASAAS. Residues 602–641 are disordered; it reads AASSKASAASSPPPPPGAGGQKSDVIDAEFEKVDKDKPQA. A compositionally biased stretch (basic and acidic residues) spans 630-641; the sequence is EFEKVDKDKPQA.

Belongs to the heat shock protein 70 family.

In terms of biological role, acts as a chaperone. The polypeptide is Chaperone protein DnaK (Methylacidiphilum infernorum (isolate V4) (Methylokorus infernorum (strain V4))).